A 1072-amino-acid polypeptide reads, in one-letter code: LRR receptor-like serine/threonine-protein kinase RGI5 (1072 aa).

The first 21 residues, 1–21 (MERERSNFFFLFLFCSWVSMA), serve as a signal peptide directing secretion. Residues 22-706 (QPTLSLSSDG…NGVKSPKIVA (685 aa)) are Extracellular-facing. Residues Cys-56 and Cys-63 are joined by a disulfide bond. LRR repeat units lie at residues 66-89 (DNRV…DLSS), 90-113 (LSSL…SFGK), 114-138 (LTHL…LGRL), 140-162 (TLQF…ISNL), 164-185 (ALQV…SFGS), 187-211 (VSLQ…LGFL), 212-234 (KNLT…TFGN), 235-259 (LVNL…LGLC), 260-283 (SELR…LGKL), 285-307 (KITS…ISNC), 308-331 (SSLV…LGKL), 332-355 (VWLE…LSNC), 356-379 (SSLI…IGNL), 381-402 (SLQS…SFGN), 403-427 (CTDL…LFSL), 429-451 (RLSK…VAKC), 452-475 (QSLV…IGEL), 477-499 (NLVF…ISNI), 500-523 (TVLE…LGNL), 524-546 (VNLE…SFGN), 548-571 (SYLN…IKNL), 572-595 (QKLT…LGQV), 597-619 (SLTI…TFSD), 620-642 (LTQL…VLGS), and 643-667 (LTSL…PFFK). Asn-80, Asn-97, and Asn-102 each carry an N-linked (GlcNAc...) asparagine glycan. The short motif at 171–172 (QD) is the Small peptide recognition element. Asn-176 is a glycosylation site (N-linked (GlcNAc...) asparagine). A Small peptide recognition motif is present at residues 193–196 (RLGG). N-linked (GlcNAc...) asparagine glycosylation is present at Asn-213. 3 short sequence motifs (small peptide recognition) span residues 216-221 (TLGFAA), Tyr-244, and 266-268 (YLH). An N-linked (GlcNAc...) asparagine glycan is attached at Asn-306. 2 short sequence motifs (small peptide recognition) span residues 314–317 (DVSA) and 336–338 (QLQ). Residue Asn-354 is glycosylated (N-linked (GlcNAc...) asparagine). The Small peptide recognition signature appears at 384 to 388 (SFFLW). Asn-402 carries an N-linked (GlcNAc...) asparagine glycan. Short sequence motifs (small peptide recognition) lie at residues 410–413 (DLSR), 432–436 (KLLLL), and 456–458 (RLR). Asn-498 carries N-linked (GlcNAc...) asparagine glycosylation. Asn-546 is a glycosylation site (N-linked (GlcNAc...) asparagine). Residues Asn-650 and Asn-655 are each glycosylated (N-linked (GlcNAc...) asparagine). The chain crosses the membrane as a helical span at residues 707 to 727 (LTAVILASITIAILAAWLLIL). At 728-1072 (RNNHLYKTSQ…SQPLIKPSSS (345 aa)) the chain is on the cytoplasmic side. Thr-764 bears the Phosphothreonine mark. In terms of domain architecture, Protein kinase spans 772–1067 (LTDENVIGKG…EWGKTSQPLI (296 aa)). ATP is bound by residues 778 to 786 (IGKGCSGIV) and Lys-800. 2 positions are modified to phosphotyrosine: Tyr-851 and Tyr-887. The active-site Proton acceptor is the Asp-900. Ser-936 carries the post-translational modification Phosphoserine. Residues Tyr-944 and Tyr-951 each carry the phosphotyrosine modification. Thr-952 is subject to Phosphothreonine.

The protein belongs to the protein kinase superfamily. Ser/Thr protein kinase family. In terms of assembly, binds to RGF1; this interaction triggers the formation of heterodimers with SERK1. In terms of processing, phosphorylated and ubiquitinated upon interaction with RGF1, thus leading to activation a subsequent degradation. Autophosphorylated. In terms of tissue distribution, expressed in roots and hypocotyls.

Its subcellular location is the membrane. The enzyme catalyses L-seryl-[protein] + ATP = O-phospho-L-seryl-[protein] + ADP + H(+). It catalyses the reaction L-threonyl-[protein] + ATP = O-phospho-L-threonyl-[protein] + ADP + H(+). Its function is as follows. Together with RGI1, RGI2, RGI3 and RGI4, acts as a receptor of RGF1, a peptide hormone that maintains the postembryonic root stem cell niche by regulating the expression levels and patterns of the transcription factor PLETHORA (PLT). Links RGF1 signal with its downstream components. This chain is LRR receptor-like serine/threonine-protein kinase RGI5, found in Arabidopsis thaliana (Mouse-ear cress).